A 587-amino-acid polypeptide reads, in one-letter code: MKRDHHQFQGRLSNHGTSSSSSSISKDKMMMVKKEEDGGGNMDDELLAVLGYKVRSSEMAEVALKLEQLETMMSNVQEDGLSHLATDTVHYNPSELYSWLDNMLSELNPPPLPASSNGLDPVLPSPEICGFPASDYDLKVIPGNAIYQFPAIDSSSSSNNQNKRLKSCSSPDSMVTSTSTGTQIGGVIGTTVTTTTTTTTAAGESTRSVILVDSQENGVRLVHALMACAEAIQQNNLTLAEALVKQIGCLAVSQAGAMRKVATYFAEALARRIYRLSPPQNQIDHCLSDTLQMHFYETCPYLKFAHFTANQAILEAFEGKKRVHVIDFSMNQGLQWPALMQALALREGGPPTFRLTGIGPPAPDNSDHLHEVGCKLAQLAEAIHVEFEYRGFVANSLADLDASMLELRPSDTEAVAVNSVFELHKLLGRPGGIEKVLGVVKQIKPVIFTVVEQESNHNGPVFLDRFTESLHYYSTLFDSLEGVPNSQDKVMSEVYLGKQICNLVACEGPDRVERHETLSQWGNRFGSSGLAPAHLGSNAFKQASMLLSVFNSGQGYRVEESNGCLMLGWHTRPLITTSAWKLSTAAY.

The tract at residues 1–26 (MKRDHHQFQGRLSNHGTSSSSSSISK) is disordered. The DELLA motif motif lies at 44 to 48 (DELLA). The LEXLE motif signature appears at 66-70 (LEQLE). The VHYNP motif signature appears at 89–93 (VHYNP). A disordered region spans residues 152 to 181 (IDSSSSSNNQNKRLKSCSSPDSMVTSTSTG). Polar residues predominate over residues 153–175 (DSSSSSNNQNKRLKSCSSPDSMV). Positions 212 to 581 (VDSQENGVRL…RPLITTSAWK (370 aa)) constitute a GRAS domain. The leucine repeat I (LRI) stretch occupies residues 219-273 (VRLVHALMACAEAIQQNNLTLAEALVKQIGCLAVSQAGAMRKVATYFAEALARRI). Residues 292–357 (QMHFYETCPY…GGPPTFRLTG (66 aa)) form a VHIID region. Residues 323–327 (VHVID) carry the VHIID motif. Residues 371–403 (EVGCKLAQLAEAIHVEFEYRGFVANSLADLDAS) are leucine repeat II (LRII). The tract at residues 415–502 (VAVNSVFELH…EVYLGKQICN (88 aa)) is PFYRE. The LXXLL motif signature appears at 423–427 (LHKLL). The segment at 505–581 (ACEGPDRVER…RPLITTSAWK (77 aa)) is SAW.

The protein belongs to the GRAS family. DELLA subfamily. Interacts directly with the GID2/SLY1 component of the SCF(GID2) complex. Interacts (via N-terminus) with GID1A, GID1B and GID1B (via N-terminus). Binds to bHLH transcription factors such as MYC2, PIF1, PIF4, PIF6 and SPT. Interacts with the BOI proteins BOI, BRG1, BRG2 and BRG3. Interacts with NFYC9. Interacts with TOPP4. Interacts with FLZ5. Binds to zinc finger proteins MGP/IDD3, IDD4, IDD5, BIB/IDD9 and JKD/IDD10 in the nucleus. Binds to and coactivates GAF1/IDD2 and ENY/IDD1. Binds to PDF2 and ATML1. In terms of processing, phosphorylated. Phosphorylation may increase the interaction with GID2. Gibberellin (GA) induces dephosphorylation of RGA by TOPP4 and subsequent degradation by the proteasomal pathway. Post-translationally, ubiquitinated. Upon GA application it is ubiquitinated by the SCF(GID2) complex, leading to its subsequent degradation. In terms of processing, O-fucosylated by SPY. O-fucosylation enhances RGA activity by promoting RGA binding to key transcription factors in brassinosteroid and light signaling pathways. In terms of tissue distribution, ubiquitously expressed. Expressed in roots, rosette leaves, bolting and mature stems, young and mature siliques, flower buds and influorescences.

The protein localises to the nucleus. Probable transcriptional regulator that acts as a repressor of the gibberellin (GA) signaling pathway. Probably acts by participating in large multiprotein complexes that repress transcription of GA-inducible genes. Positively regulates XERICO expression in seeds. Upon GA application, it is degraded by the proteasome, allowing the GA signaling pathway. Compared to other DELLA proteins, it is the most sensitive to GA application. No effect of the BOI proteins on its stability. Its activity is probably regulated by other phytohormones such as auxin and ethylene, attenuation of auxin transport delaying its GA-induced degradation. Involved in the regulation of seed dormancy and germination, including glucose-induced delay of seed germination. This chain is DELLA protein RGA, found in Arabidopsis thaliana (Mouse-ear cress).